Here is a 509-residue protein sequence, read N- to C-terminus: CDK5RAP3 protein homolog (509 aa).

Belongs to the CDK5RAP3 family.

Its subcellular location is the nucleus. It localises to the cytoplasm. Its function is as follows. Substrate adapter of E3 ligase complexes mediating ufmylation, the covalent attachment of the ubiquitin-like modifier UFM1 to substrate proteins, and which is involved in various processes, such as ribosome recycling and reticulophagy (also called ER-phagy). The chain is CDK5RAP3 protein homolog from Drosophila melanogaster (Fruit fly).